The sequence spans 296 residues: Cytidine deaminase (296 aa).

2 CMP/dCMP-type deaminase domains span residues 47-167 (TEAE…FGPK) and 186-296 (DSSD…VDPV). Position 88–90 (88–90 (NLE)) interacts with substrate. Position 101 (His-101) interacts with Zn(2+). Glu-103 serves as the catalytic Proton donor. Zn(2+) contacts are provided by Cys-128 and Cys-131.

Belongs to the cytidine and deoxycytidylate deaminase family. Homodimer. It depends on Zn(2+) as a cofactor.

It catalyses the reaction cytidine + H2O + H(+) = uridine + NH4(+). The enzyme catalyses 2'-deoxycytidine + H2O + H(+) = 2'-deoxyuridine + NH4(+). This enzyme scavenges exogenous and endogenous cytidine and 2'-deoxycytidine for UMP synthesis. The protein is Cytidine deaminase of Shewanella sp. (strain ANA-3).